Here is a 63-residue protein sequence, read N- to C-terminus: ATPase inhibitor, mitochondrial (63 aa).

Residues 1 to 23 (TAGATGATRQDGSTDAFEKREKA) form a disordered region. Residues 18 to 62 (EKREKAQEDLYIRQHEKEQLEALKESLKKQKKSLDDLEBKIDDLT) adopt a coiled-coil conformation.

It belongs to the ATPase inhibitor family.

It is found in the mitochondrion. Its function is as follows. This protein forms a one-to-one complex with ATPase to inhibit the enzyme activity completely. The protein is ATPase inhibitor, mitochondrial of Cyberlindnera jadinii (Torula yeast).